The sequence spans 484 residues: Cobyric acid synthase (484 aa).

A GATase cobBQ-type domain is found at 251-438 (ALKIAVPVLP…LHGLFGSDAY (188 aa)). Cys-333 serves as the catalytic Nucleophile. His-430 is a catalytic residue.

It belongs to the CobB/CobQ family. CobQ subfamily.

The protein operates within cofactor biosynthesis; adenosylcobalamin biosynthesis. Catalyzes amidations at positions B, D, E, and G on adenosylcobyrinic A,C-diamide. NH(2) groups are provided by glutamine, and one molecule of ATP is hydrogenolyzed for each amidation. This is Cobyric acid synthase from Rhizobium leguminosarum bv. trifolii (strain WSM2304).